The following is a 118-amino-acid chain: Small ribosomal subunit protein uS13 (118 aa).

The tract at residues 94–118 is disordered; sequence GLPLRGQRTKTNARTRKGPRKPIRK.

It belongs to the universal ribosomal protein uS13 family. Part of the 30S ribosomal subunit. Forms a loose heterodimer with protein S19. Forms two bridges to the 50S subunit in the 70S ribosome.

Its function is as follows. Located at the top of the head of the 30S subunit, it contacts several helices of the 16S rRNA. In the 70S ribosome it contacts the 23S rRNA (bridge B1a) and protein L5 of the 50S subunit (bridge B1b), connecting the 2 subunits; these bridges are implicated in subunit movement. Contacts the tRNAs in the A and P-sites. The polypeptide is Small ribosomal subunit protein uS13 (Chromohalobacter salexigens (strain ATCC BAA-138 / DSM 3043 / CIP 106854 / NCIMB 13768 / 1H11)).